The sequence spans 22 residues: 5-methyltetrahydropteroyltriglutamate--homocysteine methyltransferase (22 aa).

It belongs to the vitamin-B12 independent methionine synthase family. It depends on Zn(2+) as a cofactor.

The protein resides in the cytoplasm. It catalyses the reaction 5-methyltetrahydropteroyltri-L-glutamate + L-homocysteine = tetrahydropteroyltri-L-glutamate + L-methionine. The protein operates within amino-acid biosynthesis; L-methionine biosynthesis via de novo pathway; L-methionine from L-homocysteine (MetE route): step 1/1. Functionally, catalyzes the transfer of a methyl group from 5-methyltetrahydrofolate to homocysteine resulting in methionine formation. The polypeptide is 5-methyltetrahydropteroyltriglutamate--homocysteine methyltransferase (Pseudotsuga menziesii (Douglas-fir)).